Here is a 183-residue protein sequence, read N- to C-terminus: Peptide methionine sulfoxide reductase MsrA 1 (183 aa).

C12 is an active-site residue.

It belongs to the MsrA Met sulfoxide reductase family.

It catalyses the reaction L-methionyl-[protein] + [thioredoxin]-disulfide + H2O = L-methionyl-(S)-S-oxide-[protein] + [thioredoxin]-dithiol. The catalysed reaction is [thioredoxin]-disulfide + L-methionine + H2O = L-methionine (S)-S-oxide + [thioredoxin]-dithiol. In terms of biological role, has an important function as a repair enzyme for proteins that have been inactivated by oxidation. Catalyzes the reversible oxidation-reduction of methionine sulfoxide in proteins to methionine. This Lactococcus lactis subsp. lactis (strain IL1403) (Streptococcus lactis) protein is Peptide methionine sulfoxide reductase MsrA 1 (msrA1).